We begin with the raw amino-acid sequence, 118 residues long: Large ribosomal subunit protein bL20 (118 aa).

The protein belongs to the bacterial ribosomal protein bL20 family.

Its function is as follows. Binds directly to 23S ribosomal RNA and is necessary for the in vitro assembly process of the 50S ribosomal subunit. It is not involved in the protein synthesizing functions of that subunit. The sequence is that of Large ribosomal subunit protein bL20 from Azotobacter vinelandii (strain DJ / ATCC BAA-1303).